We begin with the raw amino-acid sequence, 425 residues long: Transmembrane protein 184A (425 aa).

Helical transmembrane passes span 51–71 (LFLT…TALL), 96–116 (LLFI…LLGG), 133–153 (FVIY…SAIM), 189–209 (TLQF…LQAF), 226–246 (VTLV…LFYF), 261–281 (FLTI…LAIL), and 303–323 (LAAG…SLAL). The segment at 375–425 (QYTQQSTHEAPGPGQGGHPAPSTHPGPASGSGGGKKSRNIEKRMLIPSEDL) is disordered. A compositionally biased stretch (low complexity) spans 392 to 402 (HPAPSTHPGPA).

This sequence belongs to the TMEM184 family. As to expression, expressed in testis, pancreas, parotid salivary gland and mammary gland (at protein level).

The protein resides in the cell membrane. Its subcellular location is the cytoplasm. It localises to the perinuclear region. It is found in the cytoplasmic vesicle membrane. The protein localises to the early endosome membrane. The protein resides in the endosome. Its subcellular location is the cytoplasmic vesicle. It localises to the secretory vesicle membrane. Functionally, acts as a heparin receptor in vascular cells. May be involved in vesicle transport in exocrine cells and Sertoli cells. In Mus musculus (Mouse), this protein is Transmembrane protein 184A (Tmem184a).